The following is a 244-amino-acid chain: Ribosomal RNA small subunit methyltransferase NEP1 (244 aa).

The segment at 1–33 is disordered; the sequence is MSAASGGFQPRERRFSVQEQDWETTPPKKLRLG. S5 and S16 each carry phosphoserine. S-adenosyl-L-methionine-binding positions include T176, G201, G206, and 219-224; that span reads ISNYPL.

It belongs to the class IV-like SAM-binding methyltransferase superfamily. RNA methyltransferase NEP1 family. In terms of assembly, homodimer. Part of the small subunit (SSU) processome, composed of more than 70 proteins and the RNA chaperone small nucleolar RNA (snoRNA) U3.

It localises to the nucleus. It is found in the nucleolus. The catalysed reaction is pseudouridine(1248) in human 18S rRNA + S-adenosyl-L-methionine = N(1)-methylpseudouridine(1248) in human 18S rRNA + S-adenosyl-L-homocysteine + H(+). Functionally, S-adenosyl-L-methionine-dependent pseudouridine N(1)-methyltransferase that methylates pseudouridine at position in 18S rRNA. Involved the biosynthesis of the hypermodified N1-methyl-N3-(3-amino-3-carboxypropyl) pseudouridine (m1acp3-Psi) conserved in eukaryotic 18S rRNA. Is not able to methylate uridine at this position. Also has an essential role in 40S ribosomal subunit biogenesis independent on its methyltransferase activity, facilitating the incorporation of ribosomal protein S19 during the formation of pre-ribosomes. Part of the small subunit (SSU) processome, first precursor of the small eukaryotic ribosomal subunit. During the assembly of the SSU processome in the nucleolus, many ribosome biogenesis factors, an RNA chaperone and ribosomal proteins associate with the nascent pre-rRNA and work in concert to generate RNA folding, modifications, rearrangements and cleavage as well as targeted degradation of pre-ribosomal RNA by the RNA exosome. The sequence is that of Ribosomal RNA small subunit methyltransferase NEP1 from Mus musculus (Mouse).